The chain runs to 87 residues: U3-theraphotoxin-Hhn1a 18 (87 aa).

A signal peptide spans 1 to 24; that stretch reads MVNTKASMFLTFAGLVLLFVVCYA. Residues 25 to 52 constitute a propeptide that is removed on maturation; sequence SESEEKEFPKEMLSSIFAVDNDFKQEER. 3 disulfides stabilise this stretch: Cys-54/Cys-67, Cys-61/Cys-72, and Cys-66/Cys-79.

The protein belongs to the neurotoxin 10 (Hwtx-1) family. 51 (Hntx-8) subfamily. Hntx-8 sub-subfamily. Expressed by the venom gland.

It is found in the secreted. In terms of biological role, ion channel inhibitor. In Cyriopagopus hainanus (Chinese bird spider), this protein is U3-theraphotoxin-Hhn1a 18.